The chain runs to 244 residues: Dirigent protein 18 (244 aa).

The N-terminal stretch at 1–25 (MMKQSPFSLLTSIFLIAALFTATTA) is a signal peptide.

The protein belongs to the plant dirigent protein family. Homodimer.

The protein resides in the secreted. It is found in the extracellular space. It localises to the apoplast. Functionally, dirigent proteins impart stereoselectivity on the phenoxy radical-coupling reaction, yielding optically active lignans from two molecules of coniferyl alcohol in the biosynthesis of lignans, flavonolignans, and alkaloids and thus plays a central role in plant secondary metabolism. This is Dirigent protein 18 (DIR18) from Arabidopsis thaliana (Mouse-ear cress).